A 492-amino-acid chain; its full sequence is Trigger factor (492 aa).

Residues 77–96 form a disordered region; it reads EILSSRGEKSATQPAISMTE. The 86-residue stretch at 169 to 254 folds into the PPIase FKBP-type domain; it reads GDRVTMNYLG…VKEVAAAAAV (86 aa). The tract at residues 439 to 492 is disordered; that stretch reads ELLADDGEEETETKKKAPAKKKAAAKADDAAEGEEAAPKKKAPAKKKATEADAE.

Belongs to the FKBP-type PPIase family. Tig subfamily.

It localises to the cytoplasm. It catalyses the reaction [protein]-peptidylproline (omega=180) = [protein]-peptidylproline (omega=0). Its function is as follows. Involved in protein export. Acts as a chaperone by maintaining the newly synthesized protein in an open conformation. Functions as a peptidyl-prolyl cis-trans isomerase. This Agrobacterium fabrum (strain C58 / ATCC 33970) (Agrobacterium tumefaciens (strain C58)) protein is Trigger factor.